A 480-amino-acid polypeptide reads, in one-letter code: Thiamine biosynthesis bifunctional protein ThiM/ThiE (480 aa).

The hydroxyethylthiazole kinase stretch occupies residues 1 to 287 (MSTLPERVRE…LYVLVSGATP (287 aa)). M40 contacts 5-(2-hydroxyethyl)-4-methylthiazole. R116 and T164 together coordinate ATP. Position 191 (G191) interacts with 5-(2-hydroxyethyl)-4-methylthiazole. A thiamine-phosphate synthase region spans residues 288-480 (PDVLEAVLQA…VRRAKGEVSA (193 aa)). 4-amino-2-methyl-5-(diphosphooxymethyl)pyrimidine is bound by residues 303 to 307 (QFREK) and N335. Positions 336 and 355 each coordinate Mg(2+). T374 serves as a coordination point for 4-amino-2-methyl-5-(diphosphooxymethyl)pyrimidine. Residue 400 to 402 (TPS) coordinates 2-[(2R,5Z)-2-carboxy-4-methylthiazol-5(2H)-ylidene]ethyl phosphate. K403 lines the 4-amino-2-methyl-5-(diphosphooxymethyl)pyrimidine pocket. Residues G431 and 451–452 (IS) contribute to the 2-[(2R,5Z)-2-carboxy-4-methylthiazol-5(2H)-ylidene]ethyl phosphate site.

The protein in the N-terminal section; belongs to the Thz kinase family. It in the C-terminal section; belongs to the thiamine-phosphate synthase family. Mg(2+) is required as a cofactor.

It carries out the reaction 5-(2-hydroxyethyl)-4-methylthiazole + ATP = 4-methyl-5-(2-phosphooxyethyl)-thiazole + ADP + H(+). The catalysed reaction is 2-[(2R,5Z)-2-carboxy-4-methylthiazol-5(2H)-ylidene]ethyl phosphate + 4-amino-2-methyl-5-(diphosphooxymethyl)pyrimidine + 2 H(+) = thiamine phosphate + CO2 + diphosphate. The enzyme catalyses 2-(2-carboxy-4-methylthiazol-5-yl)ethyl phosphate + 4-amino-2-methyl-5-(diphosphooxymethyl)pyrimidine + 2 H(+) = thiamine phosphate + CO2 + diphosphate. It catalyses the reaction 4-methyl-5-(2-phosphooxyethyl)-thiazole + 4-amino-2-methyl-5-(diphosphooxymethyl)pyrimidine + H(+) = thiamine phosphate + diphosphate. It functions in the pathway cofactor biosynthesis; thiamine diphosphate biosynthesis; 4-methyl-5-(2-phosphoethyl)-thiazole from 5-(2-hydroxyethyl)-4-methylthiazole: step 1/1. The protein operates within cofactor biosynthesis; thiamine diphosphate biosynthesis; thiamine phosphate from 4-amino-2-methyl-5-diphosphomethylpyrimidine and 4-methyl-5-(2-phosphoethyl)-thiazole: step 1/1. Condenses 4-methyl-5-(beta-hydroxyethyl)thiazole monophosphate (THZ-P) and 2-methyl-4-amino-5-hydroxymethyl pyrimidine pyrophosphate (HMP-PP) to form thiamine monophosphate (TMP). This chain is Thiamine biosynthesis bifunctional protein ThiM/ThiE (thiM/thiE), found in Symbiobacterium thermophilum (strain DSM 24528 / JCM 14929 / IAM 14863 / T).